Reading from the N-terminus, the 461-residue chain is Calcitonin gene-related peptide type 1 receptor (461 aa).

An N-terminal signal peptide occupies residues 1-22 (MEKKCTLYFLVLLPFFMILVTA). Topologically, residues 23–139 (ELEESPEDSI…NTHEKVKTAL (117 aa)) are extracellular. 3 cysteine pairs are disulfide-bonded: Cys48/Cys74, Cys65/Cys105, and Cys88/Cys127. Residues Asn66, Asn118, and Asn123 are each glycosylated (N-linked (GlcNAc...) asparagine). Residues 140–164 (NLFYLTIIGHGLSIASLLISLGIFF) traverse the membrane as a helical segment. Topologically, residues 165–175 (YFKSLSCQRIT) are cytoplasmic. Residues 176–198 (LHKNLFFSFVCNSVVTIIHLTAV) form a helical membrane-spanning segment. The Extracellular segment spans residues 199–209 (ANNQALVATNP). A helical membrane pass occupies residues 210–238 (VSCKVSQFIHLYLMGCNYFWMLCEGIYLH). Residues 239–252 (TLIVVAVFAEKQHL) lie on the Cytoplasmic side of the membrane. Residues 253–273 (MWYYFLGWGFPLIPACIHAIA) form a helical membrane-spanning segment. The Extracellular segment spans residues 274-289 (RSLYYNDNCWISSDTH). A required for RAMP3 interaction region spans residues 288–289 (TH). The helical transmembrane segment at 290-314 (LLYIIHGPICAALLVNLFFLLNIVR) threads the bilayer. The Cytoplasmic segment spans residues 315–329 (VLITKLKVTHQAESN). A helical membrane pass occupies residues 330–351 (LYMKAVRATLILVPLLGIEFVL). The Extracellular segment spans residues 352–366 (IPWRPEGKIAEEVYD). Residues 367–387 (YIMHILMHFQGLLVSTIFCFF) traverse the membrane as a helical segment. Phosphoserine occurs at positions 420 and 445.

This sequence belongs to the G-protein coupled receptor 2 family. Heterodimer of CALCRL and RAMP1; the receptor complex functions as CGRP receptor. Heterodimer of CALCRL and RAMP2 or CALCRL and RAMP3; the complexes function as adrenomedullin receptor. As to expression, predominantly expressed in the lung and heart.

It localises to the cell membrane. G protein-coupled receptor which specificity is determined by its interaction with receptor-activity-modifying proteins (RAMPs). Together with RAMP1, form the receptor complex for calcitonin-gene-related peptides CALCA/CGRP1 and CALCB/CGRP2. Together with RAMP2 or RAMP3, function as receptor complexes for adrenomedullin (ADM and ADM2). Ligand binding causes a conformation change that triggers signaling via guanine nucleotide-binding proteins (G proteins) and modulates the activity of downstream effectors. Activates cAMP-dependent pathway. In Homo sapiens (Human), this protein is Calcitonin gene-related peptide type 1 receptor.